The following is a 311-amino-acid chain: Lipoyl synthase (311 aa).

[4Fe-4S] cluster contacts are provided by Cys-58, Cys-63, Cys-69, Cys-84, Cys-88, Cys-91, and Ser-298. Residues 70–287 (FGHGTATFMI…EQEALAMGFR (218 aa)) enclose the Radical SAM core domain.

It belongs to the radical SAM superfamily. Lipoyl synthase family. The cofactor is [4Fe-4S] cluster.

The protein localises to the cytoplasm. It catalyses the reaction [[Fe-S] cluster scaffold protein carrying a second [4Fe-4S](2+) cluster] + N(6)-octanoyl-L-lysyl-[protein] + 2 oxidized [2Fe-2S]-[ferredoxin] + 2 S-adenosyl-L-methionine + 4 H(+) = [[Fe-S] cluster scaffold protein] + N(6)-[(R)-dihydrolipoyl]-L-lysyl-[protein] + 4 Fe(3+) + 2 hydrogen sulfide + 2 5'-deoxyadenosine + 2 L-methionine + 2 reduced [2Fe-2S]-[ferredoxin]. Its pathway is protein modification; protein lipoylation via endogenous pathway; protein N(6)-(lipoyl)lysine from octanoyl-[acyl-carrier-protein]: step 2/2. Its function is as follows. Catalyzes the radical-mediated insertion of two sulfur atoms into the C-6 and C-8 positions of the octanoyl moiety bound to the lipoyl domains of lipoate-dependent enzymes, thereby converting the octanoylated domains into lipoylated derivatives. The polypeptide is Lipoyl synthase (Thiobacillus denitrificans (strain ATCC 25259 / T1)).